We begin with the raw amino-acid sequence, 660 residues long: Acetyl-coenzyme A synthetase (660 aa).

Residues arginine 197–lysine 200 and threonine 317 contribute to the CoA site. ATP contacts are provided by residues glycine 397–proline 399, aspartate 421–threonine 426, aspartate 512, and arginine 528. Position 536 (serine 536) interacts with CoA. Residue arginine 539 coordinates ATP. Residues valine 550, histidine 552, and valine 555 each contribute to the Mg(2+) site. Lysine 625 is subject to N6-acetyllysine.

It belongs to the ATP-dependent AMP-binding enzyme family. The cofactor is Mg(2+). Acetylated. Deacetylation by the SIR2-homolog deacetylase activates the enzyme.

It carries out the reaction acetate + ATP + CoA = acetyl-CoA + AMP + diphosphate. In terms of biological role, catalyzes the conversion of acetate into acetyl-CoA (AcCoA), an essential intermediate at the junction of anabolic and catabolic pathways. AcsA undergoes a two-step reaction. In the first half reaction, AcsA combines acetate with ATP to form acetyl-adenylate (AcAMP) intermediate. In the second half reaction, it can then transfer the acetyl group from AcAMP to the sulfhydryl group of CoA, forming the product AcCoA. This chain is Acetyl-coenzyme A synthetase, found in Burkholderia mallei (strain NCTC 10247).